The primary structure comprises 111 residues: Small ribosomal subunit protein bS16 (111 aa).

This sequence belongs to the bacterial ribosomal protein bS16 family.

The protein is Small ribosomal subunit protein bS16 of Rickettsia typhi (strain ATCC VR-144 / Wilmington).